Here is a 150-residue protein sequence, read N- to C-terminus: Endoribonuclease YbeY (150 aa).

Zn(2+)-binding residues include H113, H117, and H123.

The protein belongs to the endoribonuclease YbeY family. Zn(2+) serves as cofactor.

It is found in the cytoplasm. Functionally, single strand-specific metallo-endoribonuclease involved in late-stage 70S ribosome quality control and in maturation of the 3' terminus of the 16S rRNA. The chain is Endoribonuclease YbeY from Wolbachia sp. subsp. Drosophila simulans (strain wRi).